The chain runs to 393 residues: Cysteine protease ATG4B (393 aa).

N-acetylmethionine is present on M1. S34 carries the phosphoserine modification. Catalysis depends on C74, which acts as the Nucleophile. At C189 the chain carries S-nitrosocysteine. Catalysis depends on residues D278 and H280. S-nitrosocysteine occurs at positions 292 and 301. The cysteines at positions 292 and 361 are disulfide-linked. Residues S316 and S383 each carry the phosphoserine modification. Positions 388-391 (FEIL) match the LIR motif. S392 bears the Phosphoserine mark.

It belongs to the peptidase C54 family. Interacts with PFKP; promoting phosphorylation of ATG4B at Ser-34. Interacts with GBP7. Phosphorylation at Ser-383 and Ser-392 promotes autophagy by increasing protein delipidation activity without affecting proteolytic activation of ATG8 proteins. Phosphorylation at Ser-316 by ULK1 inhibits autophagy by decreasing both proteolytic activation and delipidation activities. Phosphorylation at Ser-316 is dephosphorylated by protein phosphatase 2A (PP2A). Phosphorylation at Ser-34 by AKT2 promotes its hydrolase activity, leading to increased proteolytic activation and delipidation of ATG8 family proteins. Phosphorylation at Ser-34 by AKT1 promotes mitochondrial localization and inhibition of the F1F0-ATP synthase activity, leading to elevation of mitochondrial reactive oxygen species (ROS). Post-translationally, ubiquitinated by RNF5, leading to its degradation by the proteasome. In terms of processing, S-nitrosylation at Cys-189 and Cys-292 in response to high glucose decreases both proteolytic activation and delipidation activities. O-glycosylated by OGT, leading to increase protease activity, thereby promoting the proteolytic activation of ATG8 family proteins. Post-translationally, forms reversible intrachain disulfide bonds in response to oxidative stress. Forms interchain disulfide bonds, leading to formation of homooligomers in response to oxidation.

Its subcellular location is the cytoplasm. It is found in the cytosol. The protein resides in the cytoplasmic vesicle. The protein localises to the autophagosome. It localises to the endoplasmic reticulum. Its subcellular location is the mitochondrion. The catalysed reaction is [protein]-C-terminal L-amino acid-glycyl-phosphatidylethanolamide + H2O = [protein]-C-terminal L-amino acid-glycine + a 1,2-diacyl-sn-glycero-3-phosphoethanolamine. It catalyses the reaction [protein]-C-terminal L-amino acid-glycyl-phosphatidylserine + H2O = [protein]-C-terminal L-amino acid-glycine + a 1,2-diacyl-sn-glycero-3-phospho-L-serine. Its activity is regulated as follows. Inhibited by N-ethylmaleimide. Redox-regulated during autophagy since reducing conditions activate ATG4A whereas an oxidizing environment such as the presence of H(2)O(2) inhibits its activity. The cysteine protease activity compounds is inhibited by styrylquinoline compounds 4-28 and LV-320. Functionally, cysteine protease that plays a key role in autophagy by mediating both proteolytic activation and delipidation of ATG8 family proteins. Required for canonical autophagy (macroautophagy), non-canonical autophagy as well as for mitophagy. The protease activity is required for proteolytic activation of ATG8 family proteins: cleaves the C-terminal amino acid of ATG8 proteins MAP1LC3A, MAP1LC3B, MAP1LC3C, GABARAPL1, GABARAPL2 and GABARAP, to reveal a C-terminal glycine. Exposure of the glycine at the C-terminus is essential for ATG8 proteins conjugation to phosphatidylethanolamine (PE) and insertion to membranes, which is necessary for autophagy. Protease activity is also required to counteract formation of high-molecular weight conjugates of ATG8 proteins (ATG8ylation): acts as a deubiquitinating-like enzyme that removes ATG8 conjugated to other proteins, such as ATG3. In addition to the protease activity, also mediates delipidation of ATG8 family proteins. Catalyzes delipidation of PE-conjugated forms of ATG8 proteins during macroautophagy. Also involved in non-canonical autophagy, a parallel pathway involving conjugation of ATG8 proteins to single membranes at endolysosomal compartments, by catalyzing delipidation of ATG8 proteins conjugated to phosphatidylserine (PS). Compared to other members of the family (ATG4A, ATG4C or ATG4C), constitutes the major protein for proteolytic activation of ATG8 proteins, while it displays weaker delipidation activity than other ATG4 paralogs. Involved in phagophore growth during mitophagy independently of its protease activity and of ATG8 proteins: acts by regulating ATG9A trafficking to mitochondria and promoting phagophore-endoplasmic reticulum contacts during the lipid transfer phase of mitophagy. The sequence is that of Cysteine protease ATG4B from Mus musculus (Mouse).